Consider the following 169-residue polypeptide: Ribosome maturation factor RimM (169 aa).

Residues 96–169 (DGEYYWADLI…RILVDWGLDY (74 aa)) enclose the PRC barrel domain.

It belongs to the RimM family. Binds ribosomal protein uS19.

It localises to the cytoplasm. An accessory protein needed during the final step in the assembly of 30S ribosomal subunit, possibly for assembly of the head region. Essential for efficient processing of 16S rRNA. May be needed both before and after RbfA during the maturation of 16S rRNA. It has affinity for free ribosomal 30S subunits but not for 70S ribosomes. This Chromobacterium violaceum (strain ATCC 12472 / DSM 30191 / JCM 1249 / CCUG 213 / NBRC 12614 / NCIMB 9131 / NCTC 9757 / MK) protein is Ribosome maturation factor RimM.